Reading from the N-terminus, the 221-residue chain is ATP synthase subunit delta (221 aa).

The span at 1-13 shows a compositional bias: basic and acidic residues; the sequence is MGPVPEEHQRESE. Residues 1–31 are disordered; that stretch reads MGPVPEEHQRESETVASNGANESGAAVTGIP.

The protein belongs to the ATPase delta chain family. As to quaternary structure, F-type ATPases have 2 components, F(1) - the catalytic core - and F(0) - the membrane proton channel. F(1) has five subunits: alpha(3), beta(3), gamma(1), delta(1), epsilon(1). F(0) has three main subunits: a(1), b(2) and c(10-14). The alpha and beta chains form an alternating ring which encloses part of the gamma chain. F(1) is attached to F(0) by a central stalk formed by the gamma and epsilon chains, while a peripheral stalk is formed by the delta and b chains.

It is found in the cell inner membrane. F(1)F(0) ATP synthase produces ATP from ADP in the presence of a proton or sodium gradient. F-type ATPases consist of two structural domains, F(1) containing the extramembraneous catalytic core and F(0) containing the membrane proton channel, linked together by a central stalk and a peripheral stalk. During catalysis, ATP synthesis in the catalytic domain of F(1) is coupled via a rotary mechanism of the central stalk subunits to proton translocation. Functionally, this protein is part of the stalk that links CF(0) to CF(1). It either transmits conformational changes from CF(0) to CF(1) or is implicated in proton conduction. The protein is ATP synthase subunit delta of Granulibacter bethesdensis (strain ATCC BAA-1260 / CGDNIH1).